The chain runs to 76 residues: uncharacterized protein (76 aa).

This sequence to M.jannaschii MJ0857 N-terminal region.

This is an uncharacterized protein from Methanocaldococcus jannaschii (strain ATCC 43067 / DSM 2661 / JAL-1 / JCM 10045 / NBRC 100440) (Methanococcus jannaschii).